The sequence spans 311 residues: Aspartate carbamoyltransferase catalytic subunit (311 aa).

Carbamoyl phosphate is bound by residues arginine 58 and threonine 59. Position 86 (lysine 86) interacts with L-aspartate. Carbamoyl phosphate-binding residues include arginine 108, histidine 136, and glutamine 139. L-aspartate-binding residues include arginine 169 and arginine 223. The carbamoyl phosphate site is built by glycine 264 and proline 265.

Belongs to the aspartate/ornithine carbamoyltransferase superfamily. ATCase family. As to quaternary structure, heterododecamer (2C3:3R2) of six catalytic PyrB chains organized as two trimers (C3), and six regulatory PyrI chains organized as three dimers (R2).

It catalyses the reaction carbamoyl phosphate + L-aspartate = N-carbamoyl-L-aspartate + phosphate + H(+). Its pathway is pyrimidine metabolism; UMP biosynthesis via de novo pathway; (S)-dihydroorotate from bicarbonate: step 2/3. Its function is as follows. Catalyzes the condensation of carbamoyl phosphate and aspartate to form carbamoyl aspartate and inorganic phosphate, the committed step in the de novo pyrimidine nucleotide biosynthesis pathway. The polypeptide is Aspartate carbamoyltransferase catalytic subunit (Desulfosudis oleivorans (strain DSM 6200 / JCM 39069 / Hxd3) (Desulfococcus oleovorans)).